Consider the following 420-residue polypeptide: DNA replication and repair protein RecF (420 aa).

Residue 30 to 37 coordinates ATP; sequence GRNGQGKT. The interval 175-214 is disordered; the sequence is RKGGFARKGGFAPLGPPEGRPEGPPEGRTGGSATSGPPSR.

It belongs to the RecF family.

It localises to the cytoplasm. Its function is as follows. The RecF protein is involved in DNA metabolism; it is required for DNA replication and normal SOS inducibility. RecF binds preferentially to single-stranded, linear DNA. It also seems to bind ATP. This chain is DNA replication and repair protein RecF, found in Nocardioides sp. (strain ATCC BAA-499 / JS614).